We begin with the raw amino-acid sequence, 118 residues long: Acidic phospholipase A2 homolog (118 aa).

7 disulfides stabilise this stretch: Cys-11/Cys-70, Cys-25/Cys-117, Cys-27/Cys-43, Cys-42/Cys-98, Cys-49/Cys-91, Cys-59/Cys-84, and Cys-77/Cys-89.

It belongs to the phospholipase A2 family. Group I subfamily. A49 sub-subfamily. As to expression, expressed by the venom gland.

The protein localises to the secreted. In terms of biological role, snake venom phospholipase A2 (PLA2) homolog that lacks both catalytic and neurotoxicity activities. In Bungarus fasciatus (Banded krait), this protein is Acidic phospholipase A2 homolog.